The following is a 280-amino-acid chain: uncharacterized protein (280 aa).

This is an uncharacterized protein from Acanthamoeba polyphaga mimivirus (APMV).